The chain runs to 103 residues: Large ribosomal subunit protein bL21 (103 aa).

The protein belongs to the bacterial ribosomal protein bL21 family. As to quaternary structure, part of the 50S ribosomal subunit. Contacts protein L20.

Functionally, this protein binds to 23S rRNA in the presence of protein L20. The protein is Large ribosomal subunit protein bL21 of Hahella chejuensis (strain KCTC 2396).